The following is a 462-amino-acid chain: Serine--tRNA ligase, cytoplasmic (462 aa).

246 to 248 contacts L-serine; the sequence is TSE. ATP-binding positions include 279 to 281 and Val-295; that span reads RRE. Glu-302 contributes to the L-serine binding site. 366–369 provides a ligand contact to ATP; it reads ELVS. Thr-404 contributes to the L-serine binding site.

The protein belongs to the class-II aminoacyl-tRNA synthetase family. Type-1 seryl-tRNA synthetase subfamily. In terms of assembly, homodimer. The tRNA molecule binds across the dimer.

It is found in the cytoplasm. The protein localises to the cytosol. The enzyme catalyses tRNA(Ser) + L-serine + ATP = L-seryl-tRNA(Ser) + AMP + diphosphate + H(+). Catalyzes the attachment of serine to tRNA(Ser) in a two-step reaction: serine is first activated by ATP to form Ser-AMP and then transferred to the acceptor end of tRNA(Ser). This Candida albicans (strain SC5314 / ATCC MYA-2876) (Yeast) protein is Serine--tRNA ligase, cytoplasmic (SES1).